Consider the following 188-residue polypeptide: Ribosomal RNA small subunit methyltransferase G (188 aa).

Residues G69, F74, 119–120 (VQ), and R134 each bind S-adenosyl-L-methionine.

It belongs to the methyltransferase superfamily. RNA methyltransferase RsmG family.

The protein localises to the cytoplasm. The catalysed reaction is guanosine(527) in 16S rRNA + S-adenosyl-L-methionine = N(7)-methylguanosine(527) in 16S rRNA + S-adenosyl-L-homocysteine. Functionally, specifically methylates the N7 position of guanine in position 527 of 16S rRNA. The polypeptide is Ribosomal RNA small subunit methyltransferase G (Campylobacter jejuni subsp. doylei (strain ATCC BAA-1458 / RM4099 / 269.97)).